Consider the following 240-residue polypeptide: Ribonuclease P protein component 3 (240 aa).

It belongs to the eukaryotic/archaeal RNase P protein component 3 family. Consists of a catalytic RNA component and at least 4-5 protein subunits.

Its subcellular location is the cytoplasm. The catalysed reaction is Endonucleolytic cleavage of RNA, removing 5'-extranucleotides from tRNA precursor.. In terms of biological role, part of ribonuclease P, a protein complex that generates mature tRNA molecules by cleaving their 5'-ends. The sequence is that of Ribonuclease P protein component 3 from Halorubrum lacusprofundi (strain ATCC 49239 / DSM 5036 / JCM 8891 / ACAM 34).